We begin with the raw amino-acid sequence, 193 residues long: Alpha-S2-casein (193 aa).

The signal sequence occupies residues 1 to 15 (MKFFIFTCLLAVVLA). Residues Ser-23, Ser-24, Ser-25, Ser-28, Ser-47, Ser-68, Ser-123, Ser-125, Ser-128, and Ser-136 each carry the phosphoserine modification.

Belongs to the alpha-casein family. In terms of tissue distribution, mammary gland specific. Secreted in milk.

It is found in the secreted. In terms of biological role, important role in the capacity of milk to transport calcium phosphate. The sequence is that of Alpha-S2-casein (CSN1S2) from Camelus dromedarius (Dromedary).